We begin with the raw amino-acid sequence, 319 residues long: Ester hydrolase C11orf54 homolog (319 aa).

Zn(2+) contacts are provided by histidine 270, histidine 272, and histidine 282.

Monomer. The cofactor is Zn(2+).

The protein localises to the nucleus. It is found in the cytoplasm. In terms of biological role, exhibits ester hydrolase activity on the substrate p-nitrophenyl acetate, in vitro. May regulate DNA damage and repair by regulating HIF1A degradation via chaperone-mediated autophagy (CMA). This is Ester hydrolase C11orf54 homolog from Danio rerio (Zebrafish).